A 341-amino-acid chain; its full sequence is L-threonine 3-dehydrogenase (341 aa).

A Zn(2+)-binding site is contributed by Cys-38. Catalysis depends on charge relay system residues Thr-40 and His-43. Zn(2+)-binding residues include His-63, Glu-64, Cys-93, Cys-96, Cys-99, and Cys-107. NAD(+)-binding positions include Ile-175, Asp-195, Arg-200, Leu-262–Ile-264, and Ile-286–Tyr-287.

The protein belongs to the zinc-containing alcohol dehydrogenase family. As to quaternary structure, homotetramer. Zn(2+) is required as a cofactor.

Its subcellular location is the cytoplasm. It catalyses the reaction L-threonine + NAD(+) = (2S)-2-amino-3-oxobutanoate + NADH + H(+). It functions in the pathway amino-acid degradation; L-threonine degradation via oxydo-reductase pathway; glycine from L-threonine: step 1/2. Functionally, catalyzes the NAD(+)-dependent oxidation of L-threonine to 2-amino-3-ketobutyrate. The protein is L-threonine 3-dehydrogenase of Colwellia psychrerythraea (strain 34H / ATCC BAA-681) (Vibrio psychroerythus).